The primary structure comprises 568 residues: Calcium-dependent protein kinase 5 (568 aa).

The region spanning 125–379 is the Protein kinase domain; that stretch reads EIDRYKLGKG…VEQVLKHRWF (255 aa). ATP contacts are provided by residues 131–139 and lysine 154; that span reads LGKGSYGNV. Aspartate 245 (proton acceptor) is an active-site residue. A J domain autoinhibitory motif motif is present at residues 400–408; it reads KFKEFHKLC. The j domain stretch occupies residues 400-435; the sequence is KFKEFHKLCKIKKLAVTCIAYQLNEKDIGKLKKTFE. Residues 409-418 carry the J domain EF-hand interaction motif motif; that stretch reads KIKKLAVTCI. 4 consecutive EF-hand domains span residues 425-460, 462-495, 496-531, and 534-568; these read KDIGKLKKTFEAFDHNGDGVLTISEIFQCLKVNDNE, DRELYFLLKQLDTDGNGLIDYTEFLAACLDHSIF, QQDVICRNAFNVFDLDGDGVITKDELFKILSFSAVQ, and FSKEIIENLIKEVDSNNDGFIDYDEFYKMMTGVKE. Ca(2+)-binding residues include aspartate 438, asparagine 440, aspartate 442, glutamate 449, aspartate 473, aspartate 475, asparagine 477, glutamate 484, aspartate 509, aspartate 511, aspartate 513, glutamate 520, aspartate 547, asparagine 549, aspartate 551, and glutamate 558.

The protein belongs to the protein kinase superfamily. Ser/Thr protein kinase family. CDPK subfamily. It depends on Mg(2+) as a cofactor. Post-translationally, may be palmitoylated. Autophosphorylated in vitro.

It localises to the cytoplasm. Its subcellular location is the cytoplasmic vesicle. The protein localises to the secretory vesicle. The protein resides in the microneme membrane. It is found in the cell membrane. The enzyme catalyses L-seryl-[protein] + ATP = O-phospho-L-seryl-[protein] + ADP + H(+). The catalysed reaction is L-threonyl-[protein] + ATP = O-phospho-L-threonyl-[protein] + ADP + H(+). Activated by calcium. Upon calcium binding to the EF-hand domains, the C-terminus of the junction domain (J domain) undergoes a conformational change which results in the dissociation of the pseudo-substrate inhibitory motif from the catalytic domain. This, in turn, may facilitate the autophosphorylation of the activation loop at Thr-285, which leads to the kinase activation. In terms of biological role, calcium-dependent protein kinase which acts as a sensor and effector of intracellular Ca(2+) levels probably in part downstream of cGMP-activated PKG kinase. Plays a central role in host erythrocytes and hepatocytes infection cycles. During the liver stage, involved in sporozoite motility and thus in sporozoite invasion of host hepatocytes, probably together with CDPK1 and CDPK4. Involved in merosome egress from host hepatocytes, probably together with CDPK4. Required for the release of hepatic merozoites from merosomes in the host blood stream. During the asexual blood stage, required for merozoite egress from host erythrocytes by triggering microneme secretion. Phosphorylates transporter NPT1 at late schizont stage. The sequence is that of Calcium-dependent protein kinase 5 from Plasmodium falciparum (isolate 3D7).